A 342-amino-acid polypeptide reads, in one-letter code: Autoinducer 2 import system permease protein LsrC (342 aa).

Topologically, residues 1–13 (MLKFIQNNREITA) are periplasmic. Residues 14-34 (LLAVVLLFVLPGFLDRQYLSV) form a helical membrane-spanning segment. At 35–38 (QTLT) the chain is on the cytoplasmic side. Residues 39–59 (MVYSSAQILILLAMGATLVML) form a helical membrane-spanning segment. Residues 60–69 (TRNIDVSVGS) lie on the Periplasmic side of the membrane. The chain crosses the membrane as a helical span at residues 70–90 (ITGMCAVLLGMLLNAGYSLPV). At 91 to 92 (AC) the chain is on the cytoplasmic side. A helical membrane pass occupies residues 93 to 113 (VATLLLGLLAGFFNGVLVAWL). Residue Lys-114 is a topological domain, periplasmic. A helical membrane pass occupies residues 115–135 (IPAIVATLGTLGLYRGIMLLW). At 136–154 (TGGKWIEGLPAELKQLSAP) the chain is on the cytoplasmic side. The helical transmembrane segment at 155-175 (LLFGVSAIGWLTIILVAFMAW) threads the bilayer. The Periplasmic segment spans residues 176 to 212 (LLAKTAFGRSFYVTGDNLQGARQLGVRTEAIRIVAFS). The chain crosses the membrane as a helical span at residues 213 to 233 (LNGCMAALAGIVFASQIGFIP). Over 234–251 (NQTGTGLEMKAIAACVLG) the chain is Cytoplasmic. The chain crosses the membrane as a helical span at residues 252-272 (GISLLGGSGAIIGAVLGAWFL). At 273–283 (TQIDSVLVLLR) the chain is on the periplasmic side. A helical membrane pass occupies residues 284–304 (IPAWWNDFIAGMVLLAVLVFD). At 305 to 342 (GRLRCALERNLRRQKYARFMMPPPPVKPASSGKKREAA) the chain is on the cytoplasmic side.

The protein belongs to the binding-protein-dependent transport system permease family. AraH/RbsC subfamily. In terms of assembly, the complex is composed of two ATP-binding proteins (LsrA), two transmembrane proteins (LsrC and LsrD) and a solute-binding protein (LsrB).

Its subcellular location is the cell inner membrane. Functionally, part of the ABC transporter complex LsrABCD involved in autoinducer 2 (AI-2) import. Probably responsible for the translocation of the substrate across the membrane. The polypeptide is Autoinducer 2 import system permease protein LsrC (lsrC) (Escherichia coli (strain SMS-3-5 / SECEC)).